We begin with the raw amino-acid sequence, 196 residues long: UMP-CMP kinase (196 aa).

13-18 (GAGKGT) is a binding site for ATP. The tract at residues 33–63 (SAGDLLREERSRTDSEFGQLIDSYIKEGKIV) is NMP. Residues Arg39, 61-63 (KIV), and 93-96 (GFPR) each bind a ribonucleoside 5'-phosphate. CMP is bound at residue Asn100. The LID stretch occupies residues 133–143 (ERGKSSGRTDD). Residue Arg134 coordinates ATP. Residues Arg140 and Arg151 each contribute to the a ribonucleoside 5'-phosphate site. Arg179 contributes to the ATP binding site.

The protein belongs to the adenylate kinase family. UMP-CMP kinase subfamily. As to quaternary structure, monomer. Requires Mg(2+) as cofactor.

Its subcellular location is the nucleus. It localises to the cytoplasm. The catalysed reaction is CMP + ATP = CDP + ADP. It catalyses the reaction dCMP + ATP = dCDP + ADP. It carries out the reaction UMP + ATP = UDP + ADP. The enzyme catalyses a 2'-deoxyribonucleoside 5'-diphosphate + ATP = a 2'-deoxyribonucleoside 5'-triphosphate + ADP. The catalysed reaction is a ribonucleoside 5'-diphosphate + ATP = a ribonucleoside 5'-triphosphate + ADP. Functionally, catalyzes the phosphorylation of pyrimidine nucleoside monophosphates at the expense of ATP. Plays an important role in de novo pyrimidine nucleotide biosynthesis. Has preference for UMP and CMP as phosphate acceptors. Also displays broad nucleoside diphosphate kinase activity. This Danio rerio (Zebrafish) protein is UMP-CMP kinase (cmpk).